A 306-amino-acid polypeptide reads, in one-letter code: Protein SEC13 homolog (306 aa).

6 WD repeats span residues 11–50 (QHRD…QSYP), 56–97 (GHNG…WQKT), 102–143 (THEA…QQWQ), 150–195 (CHDQ…NEWT), 202–245 (CHKD…TAEW), and 252–291 (QAPC…QWIK).

This sequence belongs to the WD repeat SEC13 family. As to quaternary structure, probably part of the GATOR complex.

The protein localises to the cytoplasmic vesicle. It is found in the COPII-coated vesicle membrane. The protein resides in the endoplasmic reticulum membrane. Its subcellular location is the nucleus. It localises to the nuclear pore complex. The protein localises to the lysosome membrane. Its function is as follows. Functions as a component of the nuclear pore complex (NPC) and the COPII coat. As a component of the GATOR complex may function in the amino acid-sensing branch of the TORC1 signaling pathway. The polypeptide is Protein SEC13 homolog (Caenorhabditis briggsae).